Consider the following 237-residue polypeptide: Phosphoribosylaminoimidazole-succinocarboxamide synthase (237 aa).

It belongs to the SAICAR synthetase family.

It carries out the reaction 5-amino-1-(5-phospho-D-ribosyl)imidazole-4-carboxylate + L-aspartate + ATP = (2S)-2-[5-amino-1-(5-phospho-beta-D-ribosyl)imidazole-4-carboxamido]succinate + ADP + phosphate + 2 H(+). It functions in the pathway purine metabolism; IMP biosynthesis via de novo pathway; 5-amino-1-(5-phospho-D-ribosyl)imidazole-4-carboxamide from 5-amino-1-(5-phospho-D-ribosyl)imidazole-4-carboxylate: step 1/2. This chain is Phosphoribosylaminoimidazole-succinocarboxamide synthase, found in Deinococcus deserti (strain DSM 17065 / CIP 109153 / LMG 22923 / VCD115).